A 158-amino-acid chain; its full sequence is Cyclic pyranopterin monophosphate synthase (158 aa).

Residues 74-76 and 112-113 each bind substrate; these read MCH and ME. Asp127 is a catalytic residue.

It belongs to the MoaC family. As to quaternary structure, homohexamer; trimer of dimers.

It catalyses the reaction (8S)-3',8-cyclo-7,8-dihydroguanosine 5'-triphosphate = cyclic pyranopterin phosphate + diphosphate. It functions in the pathway cofactor biosynthesis; molybdopterin biosynthesis. Functionally, catalyzes the conversion of (8S)-3',8-cyclo-7,8-dihydroguanosine 5'-triphosphate to cyclic pyranopterin monophosphate (cPMP). The sequence is that of Cyclic pyranopterin monophosphate synthase from Thermoanaerobacter pseudethanolicus (strain ATCC 33223 / 39E) (Clostridium thermohydrosulfuricum).